Consider the following 51-residue polypeptide: Protein SspM (51 aa).

It belongs to the alpha/beta-type SASP family.

The chain is Protein SspM (sspM) from Mycolicibacterium phlei (Mycobacterium phlei).